The primary structure comprises 339 residues: Aspartate carbamoyltransferase catalytic subunit (339 aa).

Arg59 and Thr60 together coordinate carbamoyl phosphate. Lys87 is a binding site for L-aspartate. Positions 109, 142, and 145 each coordinate carbamoyl phosphate. Positions 182 and 253 each coordinate L-aspartate. Carbamoyl phosphate-binding residues include Gly294 and Pro295.

The protein belongs to the aspartate/ornithine carbamoyltransferase superfamily. ATCase family. As to quaternary structure, heterododecamer (2C3:3R2) of six catalytic PyrB chains organized as two trimers (C3), and six regulatory PyrI chains organized as three dimers (R2).

It catalyses the reaction carbamoyl phosphate + L-aspartate = N-carbamoyl-L-aspartate + phosphate + H(+). Its pathway is pyrimidine metabolism; UMP biosynthesis via de novo pathway; (S)-dihydroorotate from bicarbonate: step 2/3. Catalyzes the condensation of carbamoyl phosphate and aspartate to form carbamoyl aspartate and inorganic phosphate, the committed step in the de novo pyrimidine nucleotide biosynthesis pathway. This Prochlorococcus marinus (strain NATL1A) protein is Aspartate carbamoyltransferase catalytic subunit.